Here is a 1178-residue protein sequence, read N- to C-terminus: Pyruvate carboxylase, mitochondrial (1178 aa).

A mitochondrion-targeting transit peptide spans Met1–Ser20. An N6-acetyllysine mark is found at Lys35 and Lys39. Residues Pro36–Glu486 enclose the Biotin carboxylation domain. Position 79 is an N6-acetyllysine; alternate (Lys79). Lys79 carries the post-translational modification N6-succinyllysine; alternate. Residues Lys148 and Lys152 each carry the N6-acetyllysine modification. ATP-binding residues include Lys152 and Glu236. In terms of domain architecture, ATP-grasp spans Arg156–Glu353. Lys241 is subject to N6-acetyllysine. His271 lines the ATP pocket. N6-acetyllysine occurs at positions 297 and 319. The active site involves Arg328. An N6-acetyllysine modification is found at Lys434. Position 442 is an N6-succinyllysine (Lys442). The Pyruvate carboxyltransferase domain occupies Leu563–Phe832. Arg571–Gln575 contributes to the substrate binding site. Position 572 (Asp572) interacts with Mn(2+). The residue at position 589 (Lys589) is an N6-acetyllysine. Arg644 is a binding site for substrate. An N6-acetyllysine mark is found at Lys661 and Lys717. Residue Lys741 participates in Mn(2+) binding. Lys741 carries the post-translational modification N6-carboxylysine. At Lys748 the chain carries N6-acetyllysine. Mn(2+) is bound by residues His771 and His773. Residue Lys892 is modified to N6-acetyllysine. Residue Thr908 coordinates substrate. N6-acetyllysine occurs at positions 969 and 992. Thr1003 is modified (phosphothreonine). 3 positions are modified to N6-acetyllysine: Lys1061, Lys1090, and Lys1124. The 70-residue stretch at Lys1109–Glu1178 folds into the Biotinyl-binding domain. Position 1144 is an N6-biotinyllysine (Lys1144).

Homotetramer. Interacts (via the biotin carboxylation domain) with SIRT4. Biotin serves as cofactor. Requires Mn(2+) as cofactor. In terms of processing, acetylation of Lys-748 might play a role in catalytic activity regulation.

It is found in the mitochondrion matrix. The catalysed reaction is hydrogencarbonate + pyruvate + ATP = oxaloacetate + ADP + phosphate + H(+). It functions in the pathway carbohydrate biosynthesis; gluconeogenesis. Functionally, pyruvate carboxylase catalyzes a 2-step reaction, involving the ATP-dependent carboxylation of the covalently attached biotin in the first step and the transfer of the carboxyl group to pyruvate in the second. Catalyzes in a tissue specific manner, the initial reactions of glucose (liver, kidney) and lipid (adipose tissue, liver, brain) synthesis from pyruvate. The protein is Pyruvate carboxylase, mitochondrial of Homo sapiens (Human).